A 1163-amino-acid chain; its full sequence is GTPase-activating protein (1163 aa).

2 consecutive C2 domains span residues 26-148 (PSSN…DHWF) and 261-419 (TTST…SAWY). The Ras-GAP domain maps to 520 to 737 (ERIAPIIKAL…DAVKHFLEVI (218 aa)). Residues 762-860 (LKEGLMTKYP…WFDLLHKICL (99 aa)) form the PH domain. The Btk-type zinc finger occupies 862–898 (NSIRMQYFHPSAFVSGFYSCCGRSDENSPGCKKVLDK). The Zn(2+) site is built by H870, C881, C882, and C892. Disordered stretches follow at residues 1026-1051 (LNQQHHQQQQHQQQQQQQQQQQLQQF) and 1091-1163 (PFHQ…PPIY). The span at 1091-1157 (PFHQQQQQHH…APPSTTSSSQ (67 aa)) shows a compositional bias: low complexity.

As to quaternary structure, interacts with sty. As to expression, in third instar larvae eye imaginal disk, expressed in cells posterior to the morphogenetic furrow, in all photoreceptor and cone cell precursors as well as in still uncommitted cells.

Its function is as follows. Inhibitory regulator of the Ras-cyclic AMP pathway. May function as a negative regulator of Ras85D/Ras1 in the sev signaling pathway. Acts cell autonomously in cone cell precursors as a negative regulator of R7 photoreceptor cell determination. In Drosophila melanogaster (Fruit fly), this protein is GTPase-activating protein (RasGAP1).